The sequence spans 698 residues: Voltage-dependent calcium channel beta subunit-associated regulatory protein (698 aa).

At 1-41 (MQPTATMATAAATTATVALTTSWDNATSRPTAEPDPILDNY) the chain is on the extracellular side. Residue asparagine 25 is glycosylated (N-linked (GlcNAc...) asparagine). A helical; Signal-anchor for type III membrane protein transmembrane segment spans residues 42–62 (VLLVVVMSLFVGGTLVVLSGV). The Cytoplasmic portion of the chain corresponds to 63 to 698 (LLLCKRCWEV…APTSPDHSPA (636 aa)). Disordered regions lie at residues 90-124 (YLDNGTHPIQDPDCRGEDPEGQDTETERFLATSST) and 185-275 (ASAA…SSGS). Residues 185–197 (ASAAATPHPATTS) are compositionally biased toward low complexity. A phosphoserine mark is found at serine 290 and serine 295. 4 disordered regions span residues 308–339 (SQRASSLDTRGSPKRHHFQRQRAASESMEQEG), 360–421 (PPPR…HAQC), 438–536 (ATAS…RRDY), and 554–648 (PHFD…GSGL). Residues 360–375 (PPPRPFLASPTSPPPT) are compositionally biased toward pro residues. Over residues 402-413 (PEHAQQQDPQQE) the composition is skewed to low complexity. Residues 459–468 (SGSGSGGGGA) are compositionally biased toward gly residues. Residues 471–482 (AFPPPPESPPAL) show a composition bias toward pro residues. Basic and acidic residues predominate over residues 483-493 (RPKDGEARRLL). Residues serine 501, serine 520, and serine 524 each carry the phosphoserine modification. Over residues 562–576 (HRTRAHPHTHARKQW) the composition is skewed to basic residues. At serine 610 the chain carries Phosphoserine. Threonine 691 carries the post-translational modification Phosphothreonine. Phosphoserine occurs at positions 692 and 696.

Interacts with voltage-dependent calcium channels CACNB1, CACNB2, CACNB3 and CACNB4 beta subunits; prevents their interaction with the CACNA1C alpha subunit thereby negatively regulating the activity of the corresponding calcium channels. As to expression, expressed by neurons in the cortex, cerebellum and hippocampus and by pancreatic beta cells (at protein level).

It is found in the cytoplasmic vesicle. The protein localises to the secretory vesicle. It localises to the synaptic vesicle membrane. Its subcellular location is the cell membrane. The protein resides in the cell projection. It is found in the growth cone. In terms of biological role, negatively regulates voltage-gated calcium channels by preventing the interaction between their alpha and beta subunits. Thereby, negatively regulates calcium channels activity at the plasma membrane and indirectly inhibits calcium-regulated exocytosis. This is Voltage-dependent calcium channel beta subunit-associated regulatory protein from Mus musculus (Mouse).